Here is a 469-residue protein sequence, read N- to C-terminus: Small ribosomal subunit protein mS29 (469 aa).

Leucine 150 contacts ATP.

The protein belongs to the mitochondrion-specific ribosomal protein mS29 family. In terms of assembly, component of the mitochondrial small ribosomal subunit (mt-SSU). Mature N.crassa 74S mitochondrial ribosomes consist of a small (37S) and a large (54S) subunit. The 37S small subunit contains a 16S ribosomal RNA (16S mt-rRNA) and 32 different proteins. The 54S large subunit contains a 23S rRNA (23S mt-rRNA) and 42 different proteins.

The protein localises to the mitochondrion. In terms of biological role, component of the mitochondrial ribosome (mitoribosome), a dedicated translation machinery responsible for the synthesis of mitochondrial genome-encoded proteins, including at least some of the essential transmembrane subunits of the mitochondrial respiratory chain. The mitoribosomes are attached to the mitochondrial inner membrane and translation products are cotranslationally integrated into the membrane. This is Small ribosomal subunit protein mS29 (rsm23) from Neurospora crassa (strain ATCC 24698 / 74-OR23-1A / CBS 708.71 / DSM 1257 / FGSC 987).